The chain runs to 122 residues: LOB domain-containing protein 5 (122 aa).

The LOB domain maps to 8 to 109 (RPCSVCITKN…AYLRELQEKI (102 aa)).

It belongs to the LOB domain-containing protein family.

The protein is LOB domain-containing protein 5 (LBD5) of Arabidopsis thaliana (Mouse-ear cress).